The primary structure comprises 374 residues: Probable neutral protease 2 homolog ARB_00849 (374 aa).

A signal peptide spans 1 to 19; it reads MKFLTALSAIGALVATATA. Residues 20–189 constitute a propeptide that is removed on maturation; sequence AAVPNTPAKQ…KKSRGTIDKR (170 aa). Cystine bridges form between cysteine 197–cysteine 268 and cysteine 275–cysteine 293. Residue histidine 318 participates in Zn(2+) binding. Glutamate 319 is a catalytic residue. Histidine 322 and aspartate 333 together coordinate Zn(2+).

It belongs to the peptidase M35 family. Requires Zn(2+) as cofactor.

The protein localises to the secreted. It carries out the reaction Preferential cleavage of bonds with hydrophobic residues in P1'. Also 3-Asn-|-Gln-4 and 8-Gly-|-Ser-9 bonds in insulin B chain.. Functionally, probable secreted metalloprotease that shows high activities on basic nuclear substrates such as histone and protamine. May be involved in virulence. This chain is Probable neutral protease 2 homolog ARB_00849, found in Arthroderma benhamiae (strain ATCC MYA-4681 / CBS 112371) (Trichophyton mentagrophytes).